Consider the following 506-residue polypeptide: Zinc finger and SCAN domain containing protein 4D (506 aa).

Residues 37-119 form the SCAN box domain; it reads SAQLNFSPSN…RFMESLTDEC (83 aa). The tract at residues 238–264 is disordered; it reads SQGNSSHHVDFRSAPTPADVPMEEQPK. 4 consecutive C2H2-type zinc fingers follow at residues 395–417, 424–446, 452–474, and 480–503; these read FKCE…QRTH, LLCV…EIIH, FKCS…EMIH, and YVCS…RNYH.

Highly expressed at the 2-cell stage but its expression is rapidly turned off.

The protein localises to the nucleus. The protein resides in the chromosome. It localises to the telomere. Transcription factor required to regulate early development. Binds telomeres and plays a key role in genomic stability by regulating telomere elongation. Acts as an activator of spontaneous telomere sister chromatid exchange (T-SCE) and telomere elongation. This chain is Zinc finger and SCAN domain containing protein 4D (Zscan4d), found in Mus musculus (Mouse).